A 174-amino-acid polypeptide reads, in one-letter code: uncharacterized protein (174 aa).

A disordered region spans residues 137–174; sequence TNVTLGDDTPKSYDAPVSAIPPPATATTANATGVKPLE.

This is an uncharacterized protein from Acanthamoeba polyphaga (Amoeba).